The primary structure comprises 376 residues: Carbamoyl phosphate synthase small chain (376 aa).

Positions 1–183 (MENILLNKAL…IYKKKYIEKN (183 aa)) are CPSase. The L-glutamine site is built by serine 51, glycine 235, and glycine 237. The 188-residue stretch at 187–374 (NIVAYDFGIK…INLVKDYRLN (188 aa)) folds into the Glutamine amidotransferase type-1 domain. Cysteine 263 functions as the Nucleophile in the catalytic mechanism. L-glutamine is bound by residues leucine 264, glutamine 267, asparagine 305, and phenylalanine 308. Catalysis depends on residues histidine 347 and glutamate 349.

Belongs to the CarA family. In terms of assembly, composed of two chains; the small (or glutamine) chain promotes the hydrolysis of glutamine to ammonia, which is used by the large (or ammonia) chain to synthesize carbamoyl phosphate. Tetramer of heterodimers (alpha,beta)4.

It catalyses the reaction hydrogencarbonate + L-glutamine + 2 ATP + H2O = carbamoyl phosphate + L-glutamate + 2 ADP + phosphate + 2 H(+). The catalysed reaction is L-glutamine + H2O = L-glutamate + NH4(+). It participates in amino-acid biosynthesis; L-arginine biosynthesis; carbamoyl phosphate from bicarbonate: step 1/1. It functions in the pathway pyrimidine metabolism; UMP biosynthesis via de novo pathway; (S)-dihydroorotate from bicarbonate: step 1/3. Functionally, small subunit of the glutamine-dependent carbamoyl phosphate synthetase (CPSase). CPSase catalyzes the formation of carbamoyl phosphate from the ammonia moiety of glutamine, carbonate, and phosphate donated by ATP, constituting the first step of 2 biosynthetic pathways, one leading to arginine and/or urea and the other to pyrimidine nucleotides. The small subunit (glutamine amidotransferase) binds and cleaves glutamine to supply the large subunit with the substrate ammonia. This is Carbamoyl phosphate synthase small chain from Wigglesworthia glossinidia brevipalpis.